Consider the following 237-residue polypeptide: MKKITLALSAVCLLFTLNHSANALVSSPSTLNPGTNVAKLAEQAPVHWVSVAQIENSLTGRPPMAVGFDIDDTVLFSSPGFWRGKKTYSPDSDDYLKNPAFWEKMNNGWDEFSIPKEVARQLIDMHVRRGDSIYFVTGRSQTKTETVSKTLADNFHIPAANMNPVIFAGDKPEQNTKVQWLQEKNMRIFYGDSDNDITAARDCGIRGIRILRAANSTYKPLPQAGAFGEEVIVNSEY.

Positions 1–23 (MKKITLALSAVCLLFTLNHSANA) are cleaved as a signal peptide. Aspartate 69 functions as the Nucleophile in the catalytic mechanism. 2 residues coordinate Mg(2+): aspartate 69 and aspartate 71. Residue aspartate 71 is the Proton donor of the active site. Substrate is bound by residues 137–138 (TG) and lysine 177. Aspartate 192 is a Mg(2+) binding site.

This sequence belongs to the class B bacterial acid phosphatase family. Homotetramer. Mg(2+) serves as cofactor.

It localises to the periplasm. The enzyme catalyses a phosphate monoester + H2O = an alcohol + phosphate. Nucleosides, and particularly 2'-deoxyribonucleosides, are potent inhibitors of the phosphatase activity. The phosphatase activity is also inhibited by inorganic phosphate and EDTA in vitro. Dephosphorylates several organic phosphate monoesters such as 3'-UMP, 5'-UMP and pNPP. Also has a phosphotransferase activity catalyzing the transfer of low-energy phosphate groups from organic phosphate monoesters to free hydroxyl groups of various organic compounds such as the 2'-, 3-, or 5'-hydroxyls of nucleosides and nucleotides. Also displays significant phosphomutase activity since it is able to catalyze the transfer of the phosphate group of 3'-AMP from the 3'-position both to the 2'- and 5'-positions. One of the physiological functions of the phosphohydrolytic activity of the enzyme is believed to be the scavenging of organic phosphate esters that otherwise cannot pass the cytoplasmic membrane. In Salmonella typhimurium (strain LT2 / SGSC1412 / ATCC 700720), this protein is Class B acid phosphatase (aphA).